The following is a 63-amino-acid chain: MRCVPVFIILLLLIPSAPSADAQPKTKDDVPLASYHDNAERTLQRLWNQRHCCPIDLPCCPPG.

A signal peptide spans 1–22 (MRCVPVFIILLLLIPSAPSADA). A propeptide spanning residues 23–50 (QPKTKDDVPLASYHDNAERTLQRLWNQR) is cleaved from the precursor. At Pro62 the chain carries Proline amide.

The protein belongs to the conotoxin T superfamily. Post-translationally, contains 2 disulfide bonds that can be either 'C1-C3, C2-C4' or 'C1-C4, C2-C3', since these disulfide connectivities have been observed for conotoxins with cysteine framework V (for examples, see AC P0DQQ7 and AC P81755). In terms of tissue distribution, expressed by the venom duct.

The protein resides in the secreted. The protein is Conotoxin Vi5.1a of Conus virgo (Virgin cone).